The chain runs to 317 residues: Melanocyte-stimulating hormone receptor (317 aa).

Residues 1–37 (MPALGSQRRLLGSLNCTPPATLPFTLAPNRTGPQCLE) lie on the Extracellular side of the membrane. Asn29 is a glycosylation site (N-linked (GlcNAc...) asparagine). A helical membrane pass occupies residues 38–63 (VSIPDGLFLSLGLVSLVENVLVVAAI). At 64–72 (AKNRNLHSP) the chain is on the cytoplasmic side. Residues 73–93 (MYYFICCLAVSDLLVSVSNVL) traverse the membrane as a helical segment. At 94–118 (ETAVMLLLEAGVLATQAAVVQQLDN) the chain is on the extracellular side. A helical transmembrane segment spans residues 119 to 140 (VIDVLICGSMVSSLCFLGAIAV). The Cytoplasmic portion of the chain corresponds to 141–163 (DRYISIFYALRYHSVVTLPRAWR). A helical transmembrane segment spans residues 164–183 (IIAAIWVASILTSLLFITYY). Over 184–191 (NHKVILLC) the chain is Extracellular. A helical transmembrane segment spans residues 192 to 211 (LVGLFIAMLALMAVLYVHML). The Cytoplasmic segment spans residues 212-240 (ARACQHARGIARLQKRQRPIHQGFGLKGA). A helical transmembrane segment spans residues 241–266 (ATLTILLGVFFLCWGPFFLHLSLIVL). Residues 267-279 (CPQHPTCGCIFKN) lie on the Extracellular side of the membrane. Residues 280–300 (FNLFLALIICNAIVDPLIYAF) traverse the membrane as a helical segment. Residues 301–317 (RSQELRKTLQEVLQCSW) lie on the Cytoplasmic side of the membrane. Cys315 is lipidated: S-palmitoyl cysteine.

Belongs to the G-protein coupled receptor 1 family. Interacts with MGRN1, but does not undergo MGRN1-mediated ubiquitination; this interaction competes with GNAS-binding and thus inhibits agonist-induced cAMP production. Interacts with OPN3; the interaction results in a decrease in MC1R-mediated cAMP signaling and ultimately a decrease in melanin production in melanocytes. As to expression, highly expressed in the testis.

The protein localises to the cell membrane. In terms of biological role, receptor for MSH (alpha, beta) and ACTH. Does not seem to be active with gamma-MSH. The activity of this receptor is mediated by G proteins which activate adenylate cyclase. Mediates melanogenesis, the production of eumelanin (black/brown) and phaeomelanin (red/yellow), via regulation of cAMP signaling in melanocytes. The protein is Melanocyte-stimulating hormone receptor (MC1R) of Bos taurus (Bovine).